The following is a 140-amino-acid chain: 3-hydroxyacyl-[acyl-carrier-protein] dehydratase FabZ (140 aa).

The active site involves His46.

It belongs to the thioester dehydratase family. FabZ subfamily.

It localises to the cytoplasm. The enzyme catalyses a (3R)-hydroxyacyl-[ACP] = a (2E)-enoyl-[ACP] + H2O. Involved in unsaturated fatty acids biosynthesis. Catalyzes the dehydration of short chain beta-hydroxyacyl-ACPs and long chain saturated and unsaturated beta-hydroxyacyl-ACPs. The polypeptide is 3-hydroxyacyl-[acyl-carrier-protein] dehydratase FabZ (Pseudothermotoga lettingae (strain ATCC BAA-301 / DSM 14385 / NBRC 107922 / TMO) (Thermotoga lettingae)).